The following is a 1738-amino-acid chain: Interaptin (1738 aa).

The actin-binding stretch occupies residues 1–248 (MEHSTPLNEE…TYISLFPKVY (248 aa)). Residues 1 to 1705 (MEHSTPLNEE…RIFPSKNTRP (1705 aa)) are Cytoplasmic-facing. 2 Calponin-homology (CH) domains span residues 22–128 (IAQK…LRYQ) and 146–249 (TKPS…KVYQ). 3 disordered regions span residues 285–350 (SKST…SNLS), 1068–1090 (IQQL…SEKD), and 1589–1627 (LQQQ…PNQI). Over residues 292–301 (QQNQQQQQQN) the composition is skewed to low complexity. Polar residues predominate over residues 302-316 (LLSPNSYRNSISFSK). 3 stretches are compositionally biased toward low complexity: residues 317–344 (SPSF…NSTT), 1068–1086 (IQQL…SNQL), and 1589–1617 (LQQQ…SSTP). The stretch at 373–1598 (EESRVIEKIV…LQQQKQQQQQ (1226 aa)) forms a coiled coil. The chain crosses the membrane as a helical; Anchor for type IV membrane protein span at residues 1706-1726 (IFDWRALFFIGAAVLAISTLF).

It belongs to the alpha-actinin family.

It is found in the nucleus membrane. It localises to the endoplasmic reticulum membrane. The protein localises to the golgi apparatus. Its subcellular location is the golgi stack membrane. The protein resides in the cytoplasm. It is found in the cytoskeleton. It localises to the microtubule organizing center. The protein localises to the centrosome. Its function is as follows. May function as linker between cellular membranes and the actin cytoskeleton. Required for normal development of fruiting bodies. The protein is Interaptin (abpD) of Dictyostelium discoideum (Social amoeba).